The primary structure comprises 240 residues: 4-hydroxy-tetrahydrodipicolinate reductase (240 aa).

An NAD(+)-binding site is contributed by 7–12 (GLSGTM). K35 is a binding site for NADP(+). NAD(+) contacts are provided by residues 74-76 (GTT) and 98-101 (ATNM). The Proton donor/acceptor role is filled by H131. H132 is a (S)-2,3,4,5-tetrahydrodipicolinate binding site. K135 functions as the Proton donor in the catalytic mechanism. 141 to 142 (GS) contacts (S)-2,3,4,5-tetrahydrodipicolinate.

The protein belongs to the DapB family.

It is found in the cytoplasm. It carries out the reaction (S)-2,3,4,5-tetrahydrodipicolinate + NAD(+) + H2O = (2S,4S)-4-hydroxy-2,3,4,5-tetrahydrodipicolinate + NADH + H(+). It catalyses the reaction (S)-2,3,4,5-tetrahydrodipicolinate + NADP(+) + H2O = (2S,4S)-4-hydroxy-2,3,4,5-tetrahydrodipicolinate + NADPH + H(+). It functions in the pathway amino-acid biosynthesis; L-lysine biosynthesis via DAP pathway; (S)-tetrahydrodipicolinate from L-aspartate: step 4/4. Functionally, catalyzes the conversion of 4-hydroxy-tetrahydrodipicolinate (HTPA) to tetrahydrodipicolinate. The chain is 4-hydroxy-tetrahydrodipicolinate reductase from Alkaliphilus metalliredigens (strain QYMF).